Consider the following 192-residue polypeptide: MYQELIRNELTEAAGVLQAFLADEQNLKNIEAAAKLLADSFKQEGKVLSCGNGGSHCDAMHFAEELTGRYRENRPGYAGIAISDPSHLSCVSNDFGYDYVFSRYVEAVGRRGDVLLGISTSGNSGNILKAIEAAHAKGMKVIALTGKDGGKMAGLADVEIRVPHFGYADRIQEVHIKVIHILIQLVEKEMAK.

An SIS domain is found at Leu37 to Lys192. Asn52–Gly54 is a binding site for substrate. Residues His61 and Glu65 each contribute to the Zn(2+) site. Residues Glu65, Asn93–Asp94, Ser119–Ser121, Ser124, and Gln172 contribute to the substrate site. Zn(2+) contacts are provided by Gln172 and His180.

The protein belongs to the SIS family. GmhA subfamily. Homotetramer. Zn(2+) serves as cofactor.

Its subcellular location is the cytoplasm. It catalyses the reaction 2 D-sedoheptulose 7-phosphate = D-glycero-alpha-D-manno-heptose 7-phosphate + D-glycero-beta-D-manno-heptose 7-phosphate. The protein operates within carbohydrate biosynthesis; D-glycero-D-manno-heptose 7-phosphate biosynthesis; D-glycero-alpha-D-manno-heptose 7-phosphate and D-glycero-beta-D-manno-heptose 7-phosphate from sedoheptulose 7-phosphate: step 1/1. In terms of biological role, catalyzes the isomerization of sedoheptulose 7-phosphate in D-glycero-D-manno-heptose 7-phosphate. The protein is Phosphoheptose isomerase of Aeromonas salmonicida (strain A449).